Consider the following 269-residue polypeptide: Auxin-responsive protein IAA26 (269 aa).

Positions 25–40 (YQEDKNNTDQEKKLEL) are enriched in basic and acidic residues. Disordered stretches follow at residues 25–55 (YQED…HSAI) and 76–146 (CFNG…KQVE). An EAR-like (transcriptional repression) motif is present at residues 38-42 (LELRL). Composition is skewed to polar residues over residues 80-93 (NHFS…SVPH) and 117-136 (LAST…GQIN). Residues 137–146 (KSDDGEKQVE) are compositionally biased toward basic and acidic residues. A PB1 domain is found at 151-250 (GMFVKINMDG…SVKRLRVIKS (100 aa)).

Belongs to the Aux/IAA family. As to quaternary structure, homodimers and heterodimers. Interacts with phytochrome A. Interacts with TPL.

The protein localises to the nucleus. In terms of biological role, aux/IAA proteins are short-lived transcriptional factors that function as repressors of early auxin response genes at low auxin concentrations. Repression is thought to result from the interaction with auxin response factors (ARFs), proteins that bind to the auxin-responsive promoter element (AuxRE). Formation of heterodimers with ARF proteins may alter their ability to modulate early auxin response genes expression. The sequence is that of Auxin-responsive protein IAA26 (IAA26) from Arabidopsis thaliana (Mouse-ear cress).